The primary structure comprises 290 residues: Lipoyl synthase (290 aa).

[4Fe-4S] cluster contacts are provided by Cys44, Cys49, Cys55, Cys70, Cys74, Cys77, and Ser281. The 215-residue stretch at 56–270 folds into the Radical SAM core domain; that stretch reads WRCGTATFMI…KQIGLEKGFS (215 aa).

It belongs to the radical SAM superfamily. Lipoyl synthase family. The cofactor is [4Fe-4S] cluster.

It is found in the cytoplasm. It carries out the reaction [[Fe-S] cluster scaffold protein carrying a second [4Fe-4S](2+) cluster] + N(6)-octanoyl-L-lysyl-[protein] + 2 oxidized [2Fe-2S]-[ferredoxin] + 2 S-adenosyl-L-methionine + 4 H(+) = [[Fe-S] cluster scaffold protein] + N(6)-[(R)-dihydrolipoyl]-L-lysyl-[protein] + 4 Fe(3+) + 2 hydrogen sulfide + 2 5'-deoxyadenosine + 2 L-methionine + 2 reduced [2Fe-2S]-[ferredoxin]. It participates in protein modification; protein lipoylation via endogenous pathway; protein N(6)-(lipoyl)lysine from octanoyl-[acyl-carrier-protein]: step 2/2. Functionally, catalyzes the radical-mediated insertion of two sulfur atoms into the C-6 and C-8 positions of the octanoyl moiety bound to the lipoyl domains of lipoate-dependent enzymes, thereby converting the octanoylated domains into lipoylated derivatives. The polypeptide is Lipoyl synthase (Treponema denticola (strain ATCC 35405 / DSM 14222 / CIP 103919 / JCM 8153 / KCTC 15104)).